Consider the following 409-residue polypeptide: Failed axon connections homolog (409 aa).

The chain crosses the membrane as a helical span at residues 68–88 (YLTGGALLAAAAYLLHELLVI). Positions 372–393 (DEGAENSFSRTPDTDFTGHSLF) are disordered.

The protein belongs to the FAX family.

It localises to the membrane. May play a role in axonal development. This Mus musculus (Mouse) protein is Failed axon connections homolog (Faxc).